Reading from the N-terminus, the 375-residue chain is o-succinylbenzoate synthase (375 aa).

Lysine 166 serves as the catalytic Proton donor. Mg(2+) is bound by residues aspartate 191, glutamate 216, and aspartate 241. The Proton acceptor role is filled by lysine 265.

This sequence belongs to the mandelate racemase/muconate lactonizing enzyme family. MenC type 2 subfamily. In terms of assembly, homotetramer. Requires a divalent metal cation as cofactor.

The catalysed reaction is (1R,6R)-6-hydroxy-2-succinyl-cyclohexa-2,4-diene-1-carboxylate = 2-succinylbenzoate + H2O. The enzyme catalyses N-acetyl-D-methionine = N-acetyl-L-methionine. It catalyses the reaction N-acetyl-D-phenylalanine = N-acetyl-L-phenylalanine. It functions in the pathway quinol/quinone metabolism; 1,4-dihydroxy-2-naphthoate biosynthesis; 1,4-dihydroxy-2-naphthoate from chorismate: step 4/7. The protein operates within quinol/quinone metabolism; menaquinone biosynthesis. In terms of biological role, converts 2-succinyl-6-hydroxy-2,4-cyclohexadiene-1-carboxylate (SHCHC) to 2-succinylbenzoate (OSB). Also acts as a N-succinylamino acid racemase (NSAR) that catalyzes the racemization of various N-succinylamino acids, including N-succinyl-alanine and N-succinyl-phenylalanine. Can catalyze the racemization of a broad range of N-acylamino acids, including N-acetyl-methionine, N-acetyl-phenylalanine, N-carbamoyl-methionine, N-formyl-D-methionine, N-formyl-D-norleucine and N-carbamoyl-D-norleucine. May be a bifunctional enzyme involved in menaquinone biosynthesis and in an irreversible pathway for the conversion of D- to L-amino acids, thereby facilitating the survival and/or growth of the organism. This is o-succinylbenzoate synthase from Geobacillus kaustophilus.